Consider the following 200-residue polypeptide: Pyrrolidone-carboxylate peptidase (200 aa).

Active-site residues include E78, C141, and H165.

Belongs to the peptidase C15 family. As to quaternary structure, homotetramer.

The protein localises to the cytoplasm. It carries out the reaction Release of an N-terminal pyroglutamyl group from a polypeptide, the second amino acid generally not being Pro.. Its function is as follows. Removes 5-oxoproline from various penultimate amino acid residues except L-proline. The protein is Pyrrolidone-carboxylate peptidase of Lactobacillus helveticus (strain DPC 4571).